An 82-amino-acid chain; its full sequence is MMAKLMITVMMVLLLSLQQGADGRSKRWRKNQMAASSIMRNLITARVDPPRFCNHKICYEDSECSQWCTAGCNSITSKCDTL.

The N-terminal stretch at 1–23 is a signal peptide; the sequence is MMAKLMITVMMVLLLSLQQGADG. A propeptide spanning residues 24–46 is cleaved from the precursor; sequence RSKRWRKNQMAASSIMRNLITAR. 4-hydroxyproline is present on residues P49 and P50. Intrachain disulfides connect C53/C68, C58/C72, and C64/C79. Residues E60 and E63 each carry the 4-carboxyglutamate modification.

Belongs to the Pg turripeptide superfamily. As to expression, expressed by the venom duct.

It is found in the secreted. The sequence is that of Turripeptide Gsp9.1 from Gemmula speciosa (Splendid gem-turris).